Here is a 329-residue protein sequence, read N- to C-terminus: N-acetyl-gamma-glutamyl-phosphate reductase (329 aa).

C155 is a catalytic residue.

Belongs to the NAGSA dehydrogenase family. Type 1 subfamily.

The protein resides in the cytoplasm. The catalysed reaction is N-acetyl-L-glutamate 5-semialdehyde + phosphate + NADP(+) = N-acetyl-L-glutamyl 5-phosphate + NADPH + H(+). It participates in amino-acid biosynthesis; L-arginine biosynthesis; N(2)-acetyl-L-ornithine from L-glutamate: step 3/4. Functionally, catalyzes the NADPH-dependent reduction of N-acetyl-5-glutamyl phosphate to yield N-acetyl-L-glutamate 5-semialdehyde. The polypeptide is N-acetyl-gamma-glutamyl-phosphate reductase (Shewanella piezotolerans (strain WP3 / JCM 13877)).